Reading from the N-terminus, the 491-residue chain is Ketol-acid reductoisomerase (NADP(+)) (491 aa).

Positions 15 to 208 (AQLGKCRFMG…GGHRAGVLES (194 aa)) constitute a KARI N-terminal Rossmann domain. Residues 45–48 (CGAQ), arginine 68, arginine 76, serine 78, and 108–110 (DKQ) each bind NADP(+). Histidine 132 is an active-site residue. An NADP(+)-binding site is contributed by glycine 158. KARI C-terminal knotted domains are found at residues 209–344 (SFVA…TAPQ) and 345–484 (FEGK…MTDM). Aspartate 217, glutamate 221, glutamate 389, and glutamate 393 together coordinate Mg(2+). Residue serine 414 participates in substrate binding.

Belongs to the ketol-acid reductoisomerase family. The cofactor is Mg(2+).

The catalysed reaction is (2R)-2,3-dihydroxy-3-methylbutanoate + NADP(+) = (2S)-2-acetolactate + NADPH + H(+). The enzyme catalyses (2R,3R)-2,3-dihydroxy-3-methylpentanoate + NADP(+) = (S)-2-ethyl-2-hydroxy-3-oxobutanoate + NADPH + H(+). The protein operates within amino-acid biosynthesis; L-isoleucine biosynthesis; L-isoleucine from 2-oxobutanoate: step 2/4. Its pathway is amino-acid biosynthesis; L-valine biosynthesis; L-valine from pyruvate: step 2/4. Its function is as follows. Involved in the biosynthesis of branched-chain amino acids (BCAA). Catalyzes an alkyl-migration followed by a ketol-acid reduction of (S)-2-acetolactate (S2AL) to yield (R)-2,3-dihydroxy-isovalerate. In the isomerase reaction, S2AL is rearranged via a Mg-dependent methyl migration to produce 3-hydroxy-3-methyl-2-ketobutyrate (HMKB). In the reductase reaction, this 2-ketoacid undergoes a metal-dependent reduction by NADPH to yield (R)-2,3-dihydroxy-isovalerate. The polypeptide is Ketol-acid reductoisomerase (NADP(+)) (Salmonella agona (strain SL483)).